The chain runs to 344 residues: MLQALLDSKDFLALTLAHPEQFDGEFSFSLGDHTQVEVWDTGVIVFEPAQNEGKDVVLSCGVHGNETAPIELCNGLIKQLLQQKIIAKQRTLFLIGNPLAINNGTRIIDENMNRLFSGEHSNPPGLVNPERVRAKKLEAYIDRFYTAVADGRQRIHYDLHTAMRASKHEKFAIYPYRPGRAFSGEQIMFLAASGVDTVLFHHEPTTTFSYFSSERYGADAFTIELGKVYPMGQNDMTRFIATHEMFMRLITAKPLELDAFDADKVNLYQVCRVINKHFDDFEFTFATDVENFRSFPKGFVLAREGGQEIKVEHEFESVVFPNAKVPIGNRTVICLIPAVNADVR.

Zn(2+)-binding residues include H63, E66, and H160. The active site involves E224.

It belongs to the AspA/AstE family. Succinylglutamate desuccinylase subfamily. Zn(2+) is required as a cofactor.

It catalyses the reaction N-succinyl-L-glutamate + H2O = L-glutamate + succinate. The protein operates within amino-acid degradation; L-arginine degradation via AST pathway; L-glutamate and succinate from L-arginine: step 5/5. Transforms N(2)-succinylglutamate into succinate and glutamate. The polypeptide is Succinylglutamate desuccinylase (Shewanella baltica (strain OS223)).